The primary structure comprises 279 residues: MGIKKFKPVTSASRYKSVLDFAEITETEPYKPLTLTLNYKAGRGDGGKIAVRHKGGRVKRKYRIIDFKRRKANIPAVVKSLEYDPNRSAFISLICYKDGEYSYILAPDGIKVGDTVQSGAGSEIKIGNAMPIGKIPPGTNVHNVELQIGKGGQIARTAGSFGTIAGRDGEYILLKLPSSEVRKVHENCYATIGICSNKDHNLVSIGKAGRSRWLGKRPSVRGVVMNPVDHPHGGGEGRTSGGRHPVSPWGQPTKGYKTRRSTRPSDKFIIQKRKRNRNR.

A disordered region spans residues 216-279 (KRPSVRGVVM…IQKRKRNRNR (64 aa)). Over residues 270–279 (IQKRKRNRNR) the composition is skewed to basic residues.

It belongs to the universal ribosomal protein uL2 family. Part of the 50S ribosomal subunit. Forms a bridge to the 30S subunit in the 70S ribosome.

Its function is as follows. One of the primary rRNA binding proteins. Required for association of the 30S and 50S subunits to form the 70S ribosome, for tRNA binding and peptide bond formation. It has been suggested to have peptidyltransferase activity; this is somewhat controversial. Makes several contacts with the 16S rRNA in the 70S ribosome. This Leptospira interrogans serogroup Icterohaemorrhagiae serovar copenhageni (strain Fiocruz L1-130) protein is Large ribosomal subunit protein uL2.